The sequence spans 770 residues: Low-density lipoprotein receptor-related protein 3 (770 aa).

A signal peptide spans 1-36; the sequence is MEKRAAAGLEGAPGARAQLAVVCLVNIFLTGRLSSA. Over 37–496 the chain is Extracellular; sequence VPALAACSGK…HGCLAAVPRK (460 aa). 9 disulfide bridges follow: C43–C72, C99–C120, C166–C178, C173–C191, C185–C200, C212–C227, C219–C240, C234–C249, and C254–C282. The region spanning 43–159 is the CUB 1 domain; the sequence is CSGKLEQHTE…QGFRLSYIRG (117 aa). A glycan (N-linked (GlcNAc...) asparagine) is linked at N71. LDL-receptor class A domains lie at 165–201 and 211–250; these read SCQA…GNCS and LCPG…AGCP. A glycan (N-linked (GlcNAc...) asparagine) is linked at N199. Residues 254 to 365 form the CUB 2 domain; sequence CGRRLGSFYG…HGFNATYQVK (112 aa). Residue N359 is glycosylated (N-linked (GlcNAc...) asparagine). 2 LDL-receptor class A domains span residues 415–453 and 454–490; these read ACPP…KNCF and SCQP…HGCL. 6 cysteine pairs are disulfide-bonded: C416–C430, C423–C443, C437–C452, C455–C467, C462–C480, and C474–C489. A helical transmembrane segment spans residues 497-517; it reads VITAALIGSLVCGLLLVIALG. At 518 to 770 the chain is on the cytoplasmic side; it reads CAFKLYSLRT…ASDDEALLVC (253 aa). The interval 635–770 is disordered; the sequence is LGDGFLQPAP…ASDDEALLVC (136 aa). The span at 689 to 707 shows a compositional bias: basic and acidic residues; sequence RDPECRPVDKDRKVCREPL. Positions 729 to 738 are enriched in polar residues; sequence QVSTASSTLG. The segment covering 761–770 has biased composition (acidic residues); sequence ASDDEALLVC.

The protein belongs to the LDLR family. As to quaternary structure, binds GGA1 and GGA2. As to expression, widely expressed. Highly expressed in skeletal muscle and ovary. Expressed at intermediate level in heart, brain, liver, pancreas, prostate and small intestine. Weakly expressed in testis, colon and leukocyte.

Its subcellular location is the membrane. It is found in the coated pit. Probable receptor, which may be involved in the internalization of lipophilic molecules and/or signal transduction. Its precise role is however unclear, since it does not bind to very low density lipoprotein (VLDL) or to LRPAP1 in vitro. The protein is Low-density lipoprotein receptor-related protein 3 (LRP3) of Homo sapiens (Human).